We begin with the raw amino-acid sequence, 157 residues long: SsrA-binding protein (157 aa).

The segment at 133–157 (LHDKRESEKKRDWGREKGRLLRARG) is disordered. Residues 135–151 (DKRESEKKRDWGREKGR) are compositionally biased toward basic and acidic residues.

This sequence belongs to the SmpB family.

It localises to the cytoplasm. Its function is as follows. Required for rescue of stalled ribosomes mediated by trans-translation. Binds to transfer-messenger RNA (tmRNA), required for stable association of tmRNA with ribosomes. tmRNA and SmpB together mimic tRNA shape, replacing the anticodon stem-loop with SmpB. tmRNA is encoded by the ssrA gene; the 2 termini fold to resemble tRNA(Ala) and it encodes a 'tag peptide', a short internal open reading frame. During trans-translation Ala-aminoacylated tmRNA acts like a tRNA, entering the A-site of stalled ribosomes, displacing the stalled mRNA. The ribosome then switches to translate the ORF on the tmRNA; the nascent peptide is terminated with the 'tag peptide' encoded by the tmRNA and targeted for degradation. The ribosome is freed to recommence translation, which seems to be the essential function of trans-translation. This is SsrA-binding protein from Bradyrhizobium sp. (strain ORS 278).